A 366-amino-acid chain; its full sequence is Putative type II methyltransferase M.MjaORF1200P (366 aa).

Positions 5–366 constitute an SAM-dependent MTase C5-type domain; sequence LKFIDLFCGC…IARVIKENLK (362 aa). The active site involves Cys133.

It belongs to the class I-like SAM-binding methyltransferase superfamily. C5-methyltransferase family.

It catalyses the reaction a 2'-deoxycytidine in DNA + S-adenosyl-L-methionine = a 5-methyl-2'-deoxycytidine in DNA + S-adenosyl-L-homocysteine + H(+). Its function is as follows. A putative methylase that probably protects DNA from cleavage by the MjaORF1200P endonuclease. This Methanocaldococcus jannaschii (strain ATCC 43067 / DSM 2661 / JAL-1 / JCM 10045 / NBRC 100440) (Methanococcus jannaschii) protein is Putative type II methyltransferase M.MjaORF1200P.